The sequence spans 336 residues: MLYRIARAGIFKLDAEKAHDLAIQNFKRFNGTPLDIFYRQKLVSKPVEVMGIQFKNPIGLAAGLEKNGECIEAFGAMGFGFIEVGTVTPRPQAGNDKPRLFRLIEAEGIINRMGFNNLGVDNLVENVKKAKYDGVIGINIGKNKDTPIEKGTEDYLICMEKVYQYAGYIAINISSPNTPGLRTLQYGEALDDLLSQLKEKQKELAEKYGKYVPIALKIAPDLDDNELSQIADSLMKYKIDGVIATNTTLDRSMVEGMKHAEEMGGLSGRPIQTRSTEVVRRLKELLGDSLPIIGVGGVDSYVAAKEKMVAGADLVQVYSGFIYKGPNLIRDIVNNI.

FMN is bound by residues 62-66 (AGLEK) and T86. A substrate-binding site is contributed by K66. Residue 111-115 (NRMGF) participates in substrate binding. Positions 139 and 172 each coordinate FMN. Residue N172 coordinates substrate. S175 functions as the Nucleophile in the catalytic mechanism. N177 is a substrate binding site. Residues K217 and T245 each contribute to the FMN site. Residue 246–247 (NT) coordinates substrate. Residues G268, G297, and 318–319 (YS) contribute to the FMN site.

The protein belongs to the dihydroorotate dehydrogenase family. Type 2 subfamily. Monomer. The cofactor is FMN.

It localises to the cell membrane. It catalyses the reaction (S)-dihydroorotate + a quinone = orotate + a quinol. It functions in the pathway pyrimidine metabolism; UMP biosynthesis via de novo pathway; orotate from (S)-dihydroorotate (quinone route): step 1/1. Its function is as follows. Catalyzes the conversion of dihydroorotate to orotate with quinone as electron acceptor. This is Dihydroorotate dehydrogenase (quinone) from Aliivibrio salmonicida (strain LFI1238) (Vibrio salmonicida (strain LFI1238)).